The chain runs to 282 residues: Heme oxygenase 1, chloroplastic (282 aa).

A chloroplast-targeting transit peptide spans 1-56 (MASATVVSQIQSLYIIKPRLSPPPPPHRQFRSIYFPTTRLLQQHRFRQMKSVVIVP). His86 lines the heme b pocket.

It belongs to the heme oxygenase family. Highly expressed in root nodules and, to a lower extent, in leaves, shoots, roots, flowers and pods (at protein level).

The protein resides in the plastid. The protein localises to the chloroplast. The catalysed reaction is heme b + 3 reduced [NADPH--hemoprotein reductase] + 3 O2 = biliverdin IXalpha + CO + Fe(2+) + 3 oxidized [NADPH--hemoprotein reductase] + 3 H2O + H(+). Key enzyme in the synthesis of the chromophore of the phytochrome family of plant photoreceptors. Catalyzes the opening of the heme ring to form the open-chain tetrapyrrole biliverdin IX with the release of iron and carbon monoxide (CO). Produces specifically the biliverdin IX-alpha isomer. Can form complex with heme, is ferredoxin-dependent and its activity is increased in the presence of ascorbate. May affect the plastid-to-nucleus signaling pathway by perturbing tetrapyrrole synthesis. The plastid-to-nucleus signal plays an important role in the coordinated expression of both nuclear- and chloroplast-localized genes that encode photosynthesis-related proteins. Required for efficient symbiotic nitrogen fixation (SNF) in root nodules. Responsible for heme catabolism in uninfected nodule interstitial cells (UC), preventing superoxide production under stressful conditions (e.g. nitrate exposure and darkness) and catalyzing biliverdin (BV) production in senescing green nodules. In Lotus japonicus (Lotus corniculatus var. japonicus), this protein is Heme oxygenase 1, chloroplastic.